Here is a 282-residue protein sequence, read N- to C-terminus: UDP-3-O-acyl-N-acetylglucosamine deacetylase (282 aa).

3 residues coordinate Zn(2+): His-74, His-226, and Asp-230. The Proton donor role is filled by His-253.

Belongs to the LpxC family. Zn(2+) serves as cofactor.

The enzyme catalyses a UDP-3-O-[(3R)-3-hydroxyacyl]-N-acetyl-alpha-D-glucosamine + H2O = a UDP-3-O-[(3R)-3-hydroxyacyl]-alpha-D-glucosamine + acetate. The protein operates within glycolipid biosynthesis; lipid IV(A) biosynthesis; lipid IV(A) from (3R)-3-hydroxytetradecanoyl-[acyl-carrier-protein] and UDP-N-acetyl-alpha-D-glucosamine: step 2/6. Functionally, catalyzes the hydrolysis of UDP-3-O-myristoyl-N-acetylglucosamine to form UDP-3-O-myristoylglucosamine and acetate, the committed step in lipid A biosynthesis. The chain is UDP-3-O-acyl-N-acetylglucosamine deacetylase from Aquifex aeolicus (strain VF5).